An 891-amino-acid polypeptide reads, in one-letter code: Shieldin complex subunit 2 (891 aa).

The tract at residues 1–61 (MSQGSQVHIF…AGDQEFKNLE (61 aa)) is sufficient for interaction with SHLD3 and MAD2L2. An interaction with ASTE1 region spans residues 1–542 (MSQGSQVHIF…TYVSTKHSYL (542 aa)). Disordered regions lie at residues 184-222 (MSTG…KASD), 260-294 (NMEA…NEQS), and 333-357 (NEEN…WSCK). The segment covering 192 to 222 (PTGHRERQSQESFSDTRCEPQSEGAVRKASD) has biased composition (basic and acidic residues). 2 stretches are compositionally biased toward polar residues: residues 260 to 271 (NMEAEPTGSQGV) and 342 to 354 (LCSS…NRSW). Residues 695-866 (KYSGVVLIKA…QQDFSLLDFC (172 aa)) form a mediates interaction with SHLD1 region.

This sequence belongs to the SHLD2 family. As to quaternary structure, component of the shieldin complex, consisting of SHLD1, SHLD2, SHLD3 and MAD2L2/REV7. Within the complex, SHLD2 forms a scaffold which interacts with a SHLD3-MAD2L2 subcomplex via its N-terminus, and with SHLD1 via its C-terminus. Interacts with TP53BP1. Interacts with RIF1. Interacts with ASTE1.

It localises to the chromosome. In terms of biological role, component of the shieldin complex, which plays an important role in repair of DNA double-stranded breaks (DSBs). During G1 and S phase of the cell cycle, the complex functions downstream of TP53BP1 to promote non-homologous end joining (NHEJ) and suppress DNA end resection. Mediates various NHEJ-dependent processes including immunoglobulin class-switch recombination, and fusion of unprotected telomeres. In Mus musculus (Mouse), this protein is Shieldin complex subunit 2.